We begin with the raw amino-acid sequence, 204 residues long: Casparian strip membrane protein 3 (204 aa).

The Cytoplasmic portion of the chain corresponds to 1–41 (MKNESTFIDVPADSSSAMKGKAPLIGVAKDHTASGSGGYNR). A helical membrane pass occupies residues 42 to 62 (GLSIFDFLLRLAAIVAASVAA). Over 63–92 (GTMFTSDETLPFFTQFLQFQAGYDDLPTFQ) the chain is Extracellular. Residues 93–113 (FFVISMSLVSGYIVLSLPISV) form a helical membrane-spanning segment. At 114–125 (VTIVRPLAAAPR) the chain is on the cytoplasmic side. Residues 126 to 146 (LLLLVLDTAVMGLTMAAASSA) form a helical membrane-spanning segment. Topologically, residues 147–204 (AAISYVAHNGNQNTNWLPICQQFGDFCQKTSGGCGLFLCRRRVFHDPGCPLRSRSQRH) are extracellular.

It belongs to the Casparian strip membrane proteins (CASP) family. In terms of assembly, homodimer and heterodimers.

It localises to the cell membrane. Regulates membrane-cell wall junctions and localized cell wall deposition. Required for establishment of the Casparian strip membrane domain (CSD) and the subsequent formation of Casparian strips, a cell wall modification of the root endodermis that determines an apoplastic barrier between the intraorganismal apoplasm and the extraorganismal apoplasm and prevents lateral diffusion. The sequence is that of Casparian strip membrane protein 3 from Raphanus sativus (Radish).